A 67-amino-acid polypeptide reads, in one-letter code: Non-specific lipid-transfer protein 2 (67 aa).

4 cysteine pairs are disulfide-bonded: cysteine 3/cysteine 35, cysteine 11/cysteine 25, cysteine 26/cysteine 61, and cysteine 37/cysteine 67.

Belongs to the plant LTP family. In terms of assembly, monomer. Disulfide bonds.

Plant non-specific lipid-transfer proteins transfer phospholipids as well as galactolipids across membranes. May play a role in wax or cutin deposition in the cell walls of expanding epidermal cells and certain secretory tissues. This chain is Non-specific lipid-transfer protein 2, found in Apium graveolens var. rapaceum (Celeriac).